The primary structure comprises 77 residues: Large ribosomal subunit protein uL29 (77 aa).

The protein belongs to the universal ribosomal protein uL29 family.

The polypeptide is Large ribosomal subunit protein uL29 (Mycobacterium avium (strain 104)).